Consider the following 80-residue polypeptide: MATPWSGYLDDVSAKFDTGVDNLQTQVTEALDKLAAKPSDPALLAAYQSKLSEYNLYRNAQSNTVKVFKDIDAAIIQNFR.

The protein belongs to the SctF family. As to quaternary structure, the core secretion machinery of the T3SS is composed of approximately 20 different proteins, including cytoplasmic components, a base, an export apparatus and a needle. This subunit polymerizes and forms the helical needle filament. Interacts with the needle tip protein SipD/SctA. Interacts with the needle adapter protein PrgJ/SctI, the secretin InvG/SctC and the minor export apparatus protein SpaP/SctR. In vitro, the needle protomer refolds spontaneously to extend the needle from the distal end.

Its subcellular location is the secreted. The protein resides in the cell surface. With respect to regulation, binding of bile salts, including deoxycholate, to the PrgI:SipD interface may inhibit the T3SS function. Its function is as follows. Component of the type III secretion system (T3SS), also called injectisome, which is used to inject bacterial effector proteins into eukaryotic host cells. PrgI/SctF1 forms the external needle filament that protrudes from the bacterial surface. Is probably involved in the transduction of an activating signal, thought to be mediated by the distal tip of the needle filament, to the secretion machine. Required for invasion of epithelial cells. Required for the secretion of the effector protein SptP. In terms of biological role, during infection, can induce innate immune responses. The needle proteins interact with host TLR2 or TLR4, and induce signaling by NF-kappa-B and/or AP-1. This activation is MyD88 dependent and results in increased expression of cytokines, including TNF-alpha, IL-6 and IL-8. The polypeptide is SPI-1 type 3 secretion system needle filament protein (Salmonella typhimurium (strain LT2 / SGSC1412 / ATCC 700720)).